The primary structure comprises 326 residues: Acetyl-coenzyme A carboxylase carboxyl transferase subunit beta (326 aa).

In terms of domain architecture, CoA carboxyltransferase N-terminal spans Leu-25–Leu-308. Positions Arg-298–Asp-326 are disordered. The segment covering Lys-317–Asp-326 has biased composition (basic and acidic residues).

The protein belongs to the AccD/PCCB family. As to quaternary structure, acetyl-CoA carboxylase is a heterohexamer composed of biotin carboxyl carrier protein (AccB), biotin carboxylase (AccC) and two subunits each of ACCase subunit alpha (AccA) and ACCase subunit beta (AccD).

The protein localises to the cytoplasm. It carries out the reaction N(6)-carboxybiotinyl-L-lysyl-[protein] + acetyl-CoA = N(6)-biotinyl-L-lysyl-[protein] + malonyl-CoA. The protein operates within lipid metabolism; malonyl-CoA biosynthesis; malonyl-CoA from acetyl-CoA: step 1/1. In terms of biological role, component of the acetyl coenzyme A carboxylase (ACC) complex. Biotin carboxylase (BC) catalyzes the carboxylation of biotin on its carrier protein (BCCP) and then the CO(2) group is transferred by the transcarboxylase to acetyl-CoA to form malonyl-CoA. The sequence is that of Acetyl-coenzyme A carboxylase carboxyl transferase subunit beta from Hyphomonas neptunium (strain ATCC 15444).